A 165-amino-acid chain; its full sequence is 6,7-dimethyl-8-ribityllumazine synthase (165 aa).

Residues Phe22, 56-58, and 80-82 each bind 5-amino-6-(D-ribitylamino)uracil; these read SME and AVI. Position 85–86 (85–86) interacts with (2S)-2-hydroxy-3-oxobutyl phosphate; that stretch reads ET. The active-site Proton donor is the His88. Phe113 contacts 5-amino-6-(D-ribitylamino)uracil. Arg127 serves as a coordination point for (2S)-2-hydroxy-3-oxobutyl phosphate.

It belongs to the DMRL synthase family.

It carries out the reaction (2S)-2-hydroxy-3-oxobutyl phosphate + 5-amino-6-(D-ribitylamino)uracil = 6,7-dimethyl-8-(1-D-ribityl)lumazine + phosphate + 2 H2O + H(+). It functions in the pathway cofactor biosynthesis; riboflavin biosynthesis; riboflavin from 2-hydroxy-3-oxobutyl phosphate and 5-amino-6-(D-ribitylamino)uracil: step 1/2. Its function is as follows. Catalyzes the formation of 6,7-dimethyl-8-ribityllumazine by condensation of 5-amino-6-(D-ribitylamino)uracil with 3,4-dihydroxy-2-butanone 4-phosphate. This is the penultimate step in the biosynthesis of riboflavin. The protein is 6,7-dimethyl-8-ribityllumazine synthase of Thermotoga sp. (strain RQ2).